The following is a 1480-amino-acid chain: Cystic fibrosis transmembrane conductance regulator (1480 aa).

At M1–F77 the chain is on the cytoplasmic side. A helical membrane pass occupies residues F78–Q98. The ABC transmembrane type-1 1 domain occupies F81–L365. Topologically, residues P99 to Y122 are extracellular. A helical transmembrane segment spans residues L123–H146. The Cytoplasmic portion of the chain corresponds to H147–L195. A helical transmembrane segment spans residues A196–W216. At E217 to S222 the chain is on the extracellular side. The chain crosses the membrane as a helical span at residues A223 to M243. The Cytoplasmic portion of the chain corresponds to M244–K298. A helical membrane pass occupies residues A299–F319. Residues L320–T339 are Extracellular-facing. Residues I340–V358 form a helical membrane-spanning segment. Topologically, residues Q359–S858 are cytoplasmic. Residues W401, S434, G458–T465, and Q493 each bind ATP. An ABC transporter 1 domain is found at N423 to G646. A lipid anchor (S-palmitoyl cysteine) is attached at C524. S549 bears the Phosphoserine mark. Positions S654–E831 are disordered R region. S660 and S670 each carry phosphoserine; by PKA. At S686 the chain carries Phosphoserine; by PKC. Residue K688 forms a Glycyl lysine isopeptide (Lys-Gly) (interchain with G-Cter in ubiquitin) linkage. Residues S700 and S712 each carry the phosphoserine; by PKA modification. Position 717 is a phosphothreonine (T717). 3 positions are modified to phosphoserine; by PKA: S737, S753, and S768. At S790 the chain carries Phosphoserine; by PKC. S795 and S813 each carry phosphoserine; by PKA. A helical membrane pass occupies residues L859–V879. One can recognise an ABC transmembrane type-1 2 domain in the interval L859–S1155. Residues V880–I918 are Extracellular-facing. N-linked (GlcNAc...) asparagine glycosylation is found at N894 and N900. A discontinuously helical membrane pass occupies residues Y919–H939. The Cytoplasmic segment spans residues T940 to T990. The helical transmembrane segment at I991–L1011 threads the bilayer. Over Q1012–P1013 the chain is Extracellular. The chain crosses the membrane as a helical span at residues Y1014–L1034. Residues Q1035–T1095 are Cytoplasmic-facing. A helical transmembrane segment spans residues L1096–F1116. Residues I1117 to G1130 lie on the Extracellular side of the membrane. The helical transmembrane segment at I1131 to I1151 threads the bilayer. Residues D1152 to L1480 are Cytoplasmic-facing. An ABC transporter 2 domain is found at M1210–P1443. ATP contacts are provided by residues Y1219 and G1244 to S1251. The interaction with GORASP2 stretch occupies residues R1386 to L1480. C1395 carries the S-palmitoyl cysteine lipid modification. 2 positions are modified to phosphoserine: S1444 and S1456. A disordered region spans residues H1452–L1480. Residues E1470–L1480 are compositionally biased toward acidic residues. Positions T1478–L1480 match the PDZ-binding motif.

This sequence belongs to the ABC transporter superfamily. ABCC family. CFTR transporter (TC 3.A.1.202) subfamily. Monomer; does not require oligomerization for channel activity. May form oligomers in the membrane. Interacts with SLC26A3, SLC26A6 and SHANK2. Interacts with NHERF1 and MYO6. Interacts (via C-terminus) with GOPC (via PDZ domain); this promotes CFTR internalization and thereby decreases channel activity. Interacts with SLC4A7 through NHERF1. Found in a complex with MYO5B and RAB11A. Interacts with ANO1. Interacts with SLC26A8. Interacts with AHCYL1; the interaction increases CFTR activity. Interacts with CSE1L. The core-glycosylated form interacts with GORASP2 (via PDZ GRASP-type 1 domain) in respone to ER stress. Interacts with MARCHF2; the interaction leads to CFTR ubiqtuitination and degradation. Interacts with ADGRG2. Post-translationally, N-glycosylated. In terms of processing, phosphorylated; cAMP treatment promotes phosphorylation and activates the channel. Dephosphorylation decreases the ATPase activity (in vitro). Phosphorylation at PKA sites activates the channel. Phosphorylation at PKC sites enhances the response to phosphorylation by PKA. Phosphorylated by AMPK; this inhibits channel activity. Ubiquitinated, leading to its degradation in the lysosome. Deubiquitination by USP10 in early endosomes enhances its endocytic recycling to the cell membrane. Ubiquitinated by RNF185 during ER stress. Ubiquitinated by MARCHF2. As to expression, expressed in the respiratory airway, including bronchial epithelium, and in the female reproductive tract, including oviduct (at protein level). Detected in pancreatic intercalated ducts in the exocrine tissue, on epithelial cells in intralobular striated ducts in sublingual salivary glands, on apical membranes of crypt cells throughout the small and large intestine, and on the reabsorptive duct in eccrine sweat glands. Detected on the equatorial segment of the sperm head (at protein level). Detected in nasal and bronchial superficial epithelium. Expressed by the central cells on the sebaceous glands, dermal adipocytes and, at lower levels, by epithelial cells.

It localises to the apical cell membrane. The protein resides in the early endosome membrane. It is found in the cell membrane. The protein localises to the recycling endosome membrane. Its subcellular location is the endoplasmic reticulum membrane. It localises to the nucleus. It catalyses the reaction ATP + H2O + closed Cl(-) channel = ADP + phosphate + open Cl(-) channel.. It carries out the reaction chloride(in) = chloride(out). The enzyme catalyses hydrogencarbonate(in) = hydrogencarbonate(out). The catalysed reaction is ATP + H2O = ADP + phosphate + H(+). Epithelial ion channel that plays an important role in the regulation of epithelial ion and water transport and fluid homeostasis. Mediates the transport of chloride ions across the cell membrane. Possesses an intrinsic ATPase activity and utilizes ATP to gate its channel; the passive flow of anions through the channel is gated by cycles of ATP binding and hydrolysis by the ATP-binding domains. The ion channel is also permeable to HCO(3)(-); selectivity depends on the extracellular chloride concentration. In vitro, mediates ATP-dependent glutathione flux. Exerts its function also by modulating the activity of other ion channels and transporters. Plays an important role in airway fluid homeostasis. Contributes to the regulation of the pH and the ion content of the airway surface fluid layer and thereby plays an important role in defense against pathogens. Modulates the activity of the epithelial sodium channel (ENaC) complex, in part by regulating the cell surface expression of the ENaC complex. Inhibits the activity of the ENaC channel containing subunits SCNN1A, SCNN1B and SCNN1G. Inhibits the activity of the ENaC channel containing subunits SCNN1D, SCNN1B and SCNN1G, but not of the ENaC channel containing subunits SCNN1A, SCNN1B and SCNN1G. May regulate bicarbonate secretion and salvage in epithelial cells by regulating the transporter SLC4A7. Can inhibit the chloride channel activity of ANO1. Plays a role in the chloride and bicarbonate homeostasis during sperm epididymal maturation and capacitation. This is Cystic fibrosis transmembrane conductance regulator from Homo sapiens (Human).